The chain runs to 1079 residues: Translation initiation factor IF-2 (1079 aa).

Composition is skewed to basic and acidic residues over residues 52 to 65, 75 to 90, and 102 to 134; these read VQAQ…KEGN, RDGD…KAPE, and APER…KEPQ. Residues 52–488 are disordered; that stretch reads VQAQRDGGAR…RGKKDVRPAA (437 aa). Low complexity predominate over residues 150–184; that stretch reads APVAKVVEAAPAETPAPEAPAVKATVTAEAAPAKT. The segment covering 185–194 has biased composition (basic and acidic residues); that stretch reads VEPESERPQA. A compositionally biased stretch (low complexity) spans 276–291; the sequence is AAVAQQQMQQQAAQQQ. Basic and acidic residues predominate over residues 306-327; that stretch reads GGYRPEGQREGGYRPEGQREGG. Low complexity-rich tracts occupy residues 348–370 and 380–398; these read EGGY…GPRP and PGAP…APRP. The span at 419–429 shows a compositional bias: gly residues; that stretch reads PRPGGFGGAPG. Residues 461–471 show a composition bias toward basic and acidic residues; sequence PRGRSDDDVMR. The span at 473–482 shows a compositional bias: basic residues; sequence PRGRGKRGKK. In terms of domain architecture, tr-type G spans 578–745; that stretch reads TRPPVVTIMG…LIAIQAEILE (168 aa). The interval 587–594 is G1; it reads GHVDHGKT. 587–594 is a GTP binding site; the sequence is GHVDHGKT. The tract at residues 612 to 616 is G2; the sequence is GITQH. The segment at 633–636 is G3; sequence DTPG. Residues 633-637 and 687-690 each bind GTP; these read DTPGH and NKMD. The G4 stretch occupies residues 687 to 690; it reads NKMD. A G5 region spans residues 723–725; that stretch reads SAK.

It belongs to the TRAFAC class translation factor GTPase superfamily. Classic translation factor GTPase family. IF-2 subfamily.

It is found in the cytoplasm. One of the essential components for the initiation of protein synthesis. Protects formylmethionyl-tRNA from spontaneous hydrolysis and promotes its binding to the 30S ribosomal subunits. Also involved in the hydrolysis of GTP during the formation of the 70S ribosomal complex. In Nitratidesulfovibrio vulgaris (strain DP4) (Desulfovibrio vulgaris), this protein is Translation initiation factor IF-2.